We begin with the raw amino-acid sequence, 205 residues long: Tegument protein UL51 homolog (205 aa).

Cys4 carries the S-palmitoyl cysteine; by host lipid modification.

It belongs to the herpesviridae UL51 family. Oligomerizes. Interacts with U75; this interaction mediates U75 incorporation to virions. Post-translationally, phosphorylated. Palmitoylation is necessary for Golgi localization.

It localises to the virion tegument. It is found in the host cytoplasm. The protein localises to the host Golgi apparatus. Plays several roles during the time course of infection, including egress of virus particles from the perinuclear space and secondary envelopment of cytoplasmic capsids that bud into specific trans-Golgi network (TGN)-derived membranes. This is Tegument protein UL51 homolog (U44) from Homo sapiens (Human).